Consider the following 463-residue polypeptide: NADH-quinone oxidoreductase subunit N (463 aa).

The next 14 helical transmembrane spans lie at L5 to L25, A34 to L54, F72 to L92, K99 to G119, F120 to L140, Y154 to G174, L196 to H216, V230 to L250, A259 to I279, K286 to L303, L314 to I334, A356 to L376, V393 to L413, and L432 to L452.

It belongs to the complex I subunit 2 family. As to quaternary structure, NDH-1 is composed of 14 different subunits. Subunits NuoA, H, J, K, L, M, N constitute the membrane sector of the complex.

It is found in the cell inner membrane. The catalysed reaction is a quinone + NADH + 5 H(+)(in) = a quinol + NAD(+) + 4 H(+)(out). Its function is as follows. NDH-1 shuttles electrons from NADH, via FMN and iron-sulfur (Fe-S) centers, to quinones in the respiratory chain. The immediate electron acceptor for the enzyme in this species is believed to be ubiquinone. Couples the redox reaction to proton translocation (for every two electrons transferred, four hydrogen ions are translocated across the cytoplasmic membrane), and thus conserves the redox energy in a proton gradient. This Pelobacter propionicus (strain DSM 2379 / NBRC 103807 / OttBd1) protein is NADH-quinone oxidoreductase subunit N.